The sequence spans 1037 residues: Tyrosine-protein kinase-like otk (1037 aa).

Residues 1–23 (MDMDVMMISMCILASTFMAPGWA) form the signal peptide. Ig-like C2-type domains lie at 24–109 (STSG…REAS), 110–199 (PPAK…RVMS), 251–365 (PEDL…APLN), 368–464 (PGLL…VSIN), and 469–559 (PKFS…VQLV). At 24-582 (STSGFLRVPQ…GGDGFLVTRA (559 aa)) the chain is on the extracellular side. 5 disulfides stabilise this stretch: Cys-47-Cys-96, Cys-138-Cys-188, Cys-276-Cys-354, Cys-399-Cys-448, and Cys-491-Cys-543. Asn-336, Asn-418, Asn-430, Asn-445, Asn-513, and Asn-525 each carry an N-linked (GlcNAc...) asparagine glycan. A helical membrane pass occupies residues 583–603 (VLITMTVALAYIVLVVGLMLW). Residues 604-1037 (CRYRRQARKA…SKAMQSVAEK (434 aa)) are Cytoplasmic-facing. Disordered regions lie at residues 623 to 683 (AGGD…KSVY) and 720 to 777 (SAQS…KEEE). Positions 658 to 676 (KSNGDAQKSDDTACSQQSR) are enriched in polar residues. At Ser-681 the chain carries Phosphoserine. The Protein kinase; inactive domain occupies 693 to 1031 (LSELLQIGRG…QLGSALSKAM (339 aa)). The span at 723–734 (SDKDADTEKQHS) shows a compositional bias: basic and acidic residues. Residues 739-749 (GSGGSGSGSGS) are compositionally biased toward gly residues. Residues 768–777 (DDIEEIKEEE) are compositionally biased toward acidic residues.

This sequence belongs to the protein kinase superfamily. Tyr protein kinase family. Insulin receptor subfamily. In terms of assembly, interacts with plexA; component of a receptor complex that mediates the repulsive signaling in response to Semaphorin ligands.

It localises to the cell membrane. Functionally, acts as a calcium-dependent, homophilic cell adhesion molecule that regulates neural recognition during the development of the nervous system. Component of the repulsive Plexin signaling response to regulate motor axon guidance at the embryonic stage. Also component of a receptor complex that is required in the adult visual system to innervate the lamina layer; specific targeting of R1-R6 axons. This chain is Tyrosine-protein kinase-like otk, found in Drosophila pseudoobscura pseudoobscura (Fruit fly).